Here is a 130-residue protein sequence, read N- to C-terminus: Small ribosomal subunit protein uS11 (130 aa).

It belongs to the universal ribosomal protein uS11 family. As to quaternary structure, part of the 30S ribosomal subunit. Interacts with proteins S7 and S18. Binds to IF-3.

Located on the platform of the 30S subunit, it bridges several disparate RNA helices of the 16S rRNA. Forms part of the Shine-Dalgarno cleft in the 70S ribosome. The chain is Small ribosomal subunit protein uS11 from Synechococcus sp. (strain CC9605).